A 415-amino-acid polypeptide reads, in one-letter code: DNA primase DnaG (415 aa).

The Toprim domain maps to 171-250 (DAIIIVEGRA…AFSPRGKSVE (80 aa)). Glu177, Asp219, and Asp221 together coordinate Mg(2+). The segment at 280-323 (ELPGDLGGRPARTAPAHDEGGNSDTTGKQAVSQKRIRDGTSKVP) is disordered. Over residues 301-311 (NSDTTGKQAVS) the composition is skewed to polar residues.

It belongs to the archaeal DnaG primase family. In terms of assembly, forms a ternary complex with MCM helicase and DNA. The cofactor is Mg(2+).

It carries out the reaction ssDNA + n NTP = ssDNA/pppN(pN)n-1 hybrid + (n-1) diphosphate.. Its function is as follows. RNA polymerase that catalyzes the synthesis of short RNA molecules used as primers for DNA polymerase during DNA replication. This chain is DNA primase DnaG, found in Methanoregula boonei (strain DSM 21154 / JCM 14090 / 6A8).